We begin with the raw amino-acid sequence, 289 residues long: tRNA pseudouridine synthase A (289 aa).

Residue D53 is the Nucleophile of the active site. Y119 contacts substrate.

The protein belongs to the tRNA pseudouridine synthase TruA family. In terms of assembly, homodimer.

It carries out the reaction uridine(38/39/40) in tRNA = pseudouridine(38/39/40) in tRNA. Its function is as follows. Formation of pseudouridine at positions 38, 39 and 40 in the anticodon stem and loop of transfer RNAs. The sequence is that of tRNA pseudouridine synthase A from Corynebacterium glutamicum (strain ATCC 13032 / DSM 20300 / JCM 1318 / BCRC 11384 / CCUG 27702 / LMG 3730 / NBRC 12168 / NCIMB 10025 / NRRL B-2784 / 534).